Consider the following 385-residue polypeptide: 1-deoxy-D-xylulose 5-phosphate reductoisomerase (385 aa).

Positions 10, 11, 12, 13, 36, 38, and 122 each coordinate NADPH. Residue K123 coordinates 1-deoxy-D-xylulose 5-phosphate. E124 serves as a coordination point for NADPH. D148 contributes to the Mn(2+) binding site. 4 residues coordinate 1-deoxy-D-xylulose 5-phosphate: S149, E150, S174, and H197. E150 provides a ligand contact to Mn(2+). Position 203 (G203) interacts with NADPH. S210, N215, K216, and E219 together coordinate 1-deoxy-D-xylulose 5-phosphate. Residue E219 coordinates Mn(2+).

This sequence belongs to the DXR family. The cofactor is Mg(2+). It depends on Mn(2+) as a cofactor.

The enzyme catalyses 2-C-methyl-D-erythritol 4-phosphate + NADP(+) = 1-deoxy-D-xylulose 5-phosphate + NADPH + H(+). Its pathway is isoprenoid biosynthesis; isopentenyl diphosphate biosynthesis via DXP pathway; isopentenyl diphosphate from 1-deoxy-D-xylulose 5-phosphate: step 1/6. Functionally, catalyzes the NADPH-dependent rearrangement and reduction of 1-deoxy-D-xylulose-5-phosphate (DXP) to 2-C-methyl-D-erythritol 4-phosphate (MEP). In Citrifermentans bemidjiense (strain ATCC BAA-1014 / DSM 16622 / JCM 12645 / Bem) (Geobacter bemidjiensis), this protein is 1-deoxy-D-xylulose 5-phosphate reductoisomerase.